Consider the following 94-residue polypeptide: Small ribosomal subunit protein uS19 (94 aa).

Belongs to the universal ribosomal protein uS19 family.

In terms of biological role, protein S19 forms a complex with S13 that binds strongly to the 16S ribosomal RNA. The protein is Small ribosomal subunit protein uS19 of Syntrophomonas wolfei subsp. wolfei (strain DSM 2245B / Goettingen).